The following is a 483-amino-acid chain: 6-phosphogluconate dehydrogenase, decarboxylating (483 aa).

NADP(+) contacts are provided by residues 10–15 and 33–35; these read GLAVMG and NRT. Position 38 is an N6-acetyllysine (Lys-38). Ser-57 carries the post-translational modification Phosphoserine. At Lys-59 the chain carries N6-acetyllysine. NADP(+)-binding positions include 75–77 and Asn-103; that span reads VKA. Substrate-binding positions include Asn-103 and 129-131; that span reads SGG. Phosphoserine is present on Ser-129. Residue Lys-184 is the Proton acceptor of the active site. 187-188 contributes to the substrate binding site; sequence HN. Glu-191 serves as the catalytic Proton donor. The substrate site is built by Tyr-192, Lys-261, Arg-288, Arg-447, and His-453. 478–481 lines the NADP(+) pocket; sequence SSSY.

It belongs to the 6-phosphogluconate dehydrogenase family. As to quaternary structure, homodimer.

The protein resides in the cytoplasm. The catalysed reaction is 6-phospho-D-gluconate + NADP(+) = D-ribulose 5-phosphate + CO2 + NADPH. The protein operates within carbohydrate degradation; pentose phosphate pathway; D-ribulose 5-phosphate from D-glucose 6-phosphate (oxidative stage): step 3/3. Its function is as follows. Catalyzes the oxidative decarboxylation of 6-phosphogluconate to ribulose 5-phosphate and CO(2), with concomitant reduction of NADP to NADPH. This is 6-phosphogluconate dehydrogenase, decarboxylating from Rattus norvegicus (Rat).